The chain runs to 318 residues: ATP phosphoribosyltransferase regulatory subunit (318 aa).

This sequence belongs to the class-II aminoacyl-tRNA synthetase family. HisZ subfamily. Heteromultimer composed of HisG and HisZ subunits.

The protein localises to the cytoplasm. The protein operates within amino-acid biosynthesis; L-histidine biosynthesis; L-histidine from 5-phospho-alpha-D-ribose 1-diphosphate: step 1/9. Functionally, required for the first step of histidine biosynthesis. May allow the feedback regulation of ATP phosphoribosyltransferase activity by histidine. This Lactococcus lactis subsp. cremoris (strain MG1363) protein is ATP phosphoribosyltransferase regulatory subunit.